A 161-amino-acid chain; its full sequence is Myosin regulatory light chain (161 aa).

2 positions are modified to phosphoserine: S13 and S14. EF-hand domains are found at residues E20–F55, V56–Q91, and S93–K128.

Myosin is a hexamer of 2 heavy chains and 4 light chains (two regulatory light chains and two essential light chains).

This is Myosin regulatory light chain (mlcR) from Dictyostelium discoideum (Social amoeba).